Consider the following 215-residue polypeptide: Protein NETWORKED 3B (215 aa).

An NAB domain is found at 5–90; it reads SKWWWIGANH…QKHDLLIKTS (86 aa). Residues 134-165 are a coiled coil; that stretch reads DETMKEELEILREENRVYKEKKEVVTRLLANL.

Belongs to the NET family. In terms of assembly, interacts with F-actin.

Plant-specific actin binding protein. May be part of a membrane-cytoskeletal adapter complex. The chain is Protein NETWORKED 3B from Arabidopsis thaliana (Mouse-ear cress).